Consider the following 179-residue polypeptide: Large ribosomal subunit protein uL5 (179 aa).

Belongs to the universal ribosomal protein uL5 family. Part of the 50S ribosomal subunit; part of the 5S rRNA/L5/L18/L25 subcomplex. Contacts the 5S rRNA and the P site tRNA. Forms a bridge to the 30S subunit in the 70S ribosome.

Functionally, this is one of the proteins that bind and probably mediate the attachment of the 5S RNA into the large ribosomal subunit, where it forms part of the central protuberance. In the 70S ribosome it contacts protein S13 of the 30S subunit (bridge B1b), connecting the 2 subunits; this bridge is implicated in subunit movement. Contacts the P site tRNA; the 5S rRNA and some of its associated proteins might help stabilize positioning of ribosome-bound tRNAs. The polypeptide is Large ribosomal subunit protein uL5 (Geobacillus kaustophilus (strain HTA426)).